Consider the following 223-residue polypeptide: NAD(P)H-hydrate epimerase (223 aa).

Residues 9-211 (AIKLDEELMG…ELKDKLHLIL (203 aa)) form the YjeF N-terminal domain. 60-64 (NNGGD) contacts (6S)-NADPHX. The K(+) site is built by asparagine 61 and aspartate 120. Residues 124–130 (GFSFKGP) and aspartate 153 each bind (6S)-NADPHX. Serine 156 contributes to the K(+) binding site.

This sequence belongs to the NnrE/AIBP family. K(+) serves as cofactor.

It carries out the reaction (6R)-NADHX = (6S)-NADHX. The enzyme catalyses (6R)-NADPHX = (6S)-NADPHX. Catalyzes the epimerization of the S- and R-forms of NAD(P)HX, a damaged form of NAD(P)H that is a result of enzymatic or heat-dependent hydration. This is a prerequisite for the S-specific NAD(P)H-hydrate dehydratase to allow the repair of both epimers of NAD(P)HX. In Entamoeba histolytica (strain ATCC 30459 / HM-1:IMSS / ABRM), this protein is NAD(P)H-hydrate epimerase.